The following is a 168-amino-acid chain: Glycine-rich RNA-binding protein 2 (168 aa).

The RRM domain maps to Y8–S86. The interval G148–N168 is disordered.

In terms of biological role, possibly has a role in RNA transcription or processing during stress. The sequence is that of Glycine-rich RNA-binding protein 2 (GRP2) from Sorghum bicolor (Sorghum).